The chain runs to 507 residues: Protein DETOXIFICATION 39 (507 aa).

The next 12 membrane-spanning stretches (helical) occupy residues 58–78, 92–112, 141–161, 178–198, 209–229, 233–253, 287–307, 318–338, 359–379, 403–423, 433–453, and 459–479; these read VLFR…GMGI, LAAA…MLGM, IVLA…YPIL, IAGL…QKFL, FISA…VYVM, FMGI…SQCF, AVMI…AGLL, SICM…NAAV, WTAT…VIWF, FLAI…VAVG, VNVG…GFTF, and GIWT…LYVT.

This sequence belongs to the multi antimicrobial extrusion (MATE) (TC 2.A.66.1) family.

Its subcellular location is the membrane. The sequence is that of Protein DETOXIFICATION 39 from Arabidopsis thaliana (Mouse-ear cress).